Reading from the N-terminus, the 210-residue chain is Small ribosomal subunit protein uS4 (210 aa).

One can recognise an S4 RNA-binding domain in the interval 100-160 (GRLDNVVYRM…EKSKNQLRVK (61 aa)).

The protein belongs to the universal ribosomal protein uS4 family. In terms of assembly, part of the 30S ribosomal subunit. Contacts protein S5. The interaction surface between S4 and S5 is involved in control of translational fidelity.

Its function is as follows. One of the primary rRNA binding proteins, it binds directly to 16S rRNA where it nucleates assembly of the body of the 30S subunit. With S5 and S12 plays an important role in translational accuracy. This chain is Small ribosomal subunit protein uS4, found in Alcanivorax borkumensis (strain ATCC 700651 / DSM 11573 / NCIMB 13689 / SK2).